The primary structure comprises 1118 residues: Repetin (1118 aa).

Residues 1–91 (MPQLLNSILN…VQACHHKLDS (91 aa)) form an S-100-like region. EF-hand domains lie at 13–48 (KVFQDYAEYHGVGASLSKKELKQLLLTEFGDILRRP) and 49–84 (NDPETVETILEHLDRDRNGYVDFHEYLLLVFQLVQA). Residues Ser27, Glu32, Asp62, Asp64, Asn66, Tyr68, and Glu73 each contribute to the Ca(2+) site. Positions 94-1118 (YGSRTSSQKE…YVQEQAAYQY (1025 aa)) are disordered. The segment covering 100–115 (SQKEHDQEGTRSHKFS) has biased composition (basic and acidic residues). Residues 138 to 148 (SEGQHQNVQHD) show a composition bias toward polar residues. Basic and acidic residues-rich tracts occupy residues 149–164 (QSQRQDKDSERHDTDP) and 172–186 (FHGDSHYGHSERQDT). The span at 237 to 252 (GQSKTSGQQSSHGQSG) shows a compositional bias: low complexity. A compositionally biased stretch (polar residues) spans 259-299 (YSSQTSQQESDSYEQYGSQHQKSGNSQTERQGQNSQYGQTN). Repeat copies occupy residues 273–284 (QYGSQHQKSGNS), 285–296 (QTERQGQNSQYG), 297–308 (QTNKKGHSSYHE), 309–320 (QTEGQGQSFHYG), 321–332 (QKGRKDQSFQQG), 333–344 (QKGRKDQSPHLG), 345–356 (QKGRQDQSPHRG), 357–368 (QKGRQDQSPHQG), 369–380 (QKGRQDQSPHRG), 381–392 (QKGRQDQSPHQG), 393–404 (QKGRQDQSPHLG), 405–416 (QKGRQDQSPHQG), 417–428 (QKGRQDQSPHQG), 429–440 (QKGRQDQSSHQG), 441–452 (QKGRQDQSSHQG), 453–464 (QKGRQDQSSHQG), 465–476 (QKGRQDQSSHQG), 477–488 (QREGQDQNSQWH), 489–500 (RTDSQGQSFHYG), 501–512 (QTGGHSLSSHQG), 513–524 (QTDSQGQNSNWH), 525–536 (RTDSQGQSFHYG), 537–548 (QTGGQGLSSHQG), 549–560 (QTDSQGQNSNWH), 561–572 (RTDSQGQSFHFD), 573–584 (QAGREVQGSHHG), 585–596 (QTDRQSQNSNWH), 597–608 (RTDSQGQSFHFD), 609–620 (QAGKEVQGSHQG), 621–632 (QTDSQGQSSHWH), 633–644 (QTDRQGQSSQQG), 645–656 (HKDRQGQNTHQG), 657–668 (QKGRQDLSPHQG), 669–680 (QKGRQDQSPHLG), 681–692 (QKGRHDQSPHQG), 693–704 (QKGRHDQSPHQG), 705–716 (QKGRQDLSSHQG), 717–728 (QKGRQDQSPHLG), 729–740 (QKGRHDQSPHRG), 741–752 (QKGRQDQSPHQG), 753–764 (QKGRQDQSSHQG), 765–776 (QREGQDQNSHWH), 777–788 (RTDRQGQSFHYG), 789–800 (QTGGQGLSSHQG), 801–812 (QTDSQGQNSQWH), 813–824 (RTDSQGQSFHFD), 825–836 (QAGREGQSSHHG), and 837–848 (QTDRQSQSSHCG). A 48 X 12 AA approximate tandem repeats of Q-[KT]-[GD]-[RS]-Q-[DG]-Q-S-[PS]-H-X-G region spans residues 273–848 (QYGSQHQKSG…DRQSQSSHCG (576 aa)). A 22 X 12 AA approximate tandem repeats of Q-K-G-R-Q-D-Q-S-P-H-Q-G region spans residues 321 to 764 (QKGRKDQSFQ…GRQDQSSHQG (444 aa)). 2 stretches are compositionally biased toward basic and acidic residues: residues 347–363 (GRQDQSPHRGQKGRQDQ) and 371–387 (GRQDQSPHRGQKGRQDQ). Residues 434–466 (DQSSHQGQKGRQDQSSHQGQKGRQDQSSHQGQK) show a composition bias toward polar residues. Residues 467-481 (GRQDQSSHQGQREGQ) show a composition bias toward basic and acidic residues. Composition is skewed to polar residues over residues 482–535 (DQNS…SFHY) and 543–570 (LSSHQGQTDSQGQNSNWHRTDSQGQSFH). Composition is skewed to polar residues over residues 587–606 (DRQSQNSNWHRTDSQGQSFH) and 616–643 (GSHQGQTDSQGQSSHWHQTDRQGQSSQQ). Polar residues predominate over residues 710–726 (DLSSHQGQKGRQDQSPH). Basic and acidic residues-rich tracts occupy residues 731 to 747 (GRHDQSPHRGQKGRQDQ) and 755 to 769 (GRQDQSSHQGQREGQ). Polar residues-rich tracts occupy residues 795-822 (LSSHQGQTDSQGQNSQWHRTDSQGQSFH), 833-848 (SHHGQTDRQSQSSHCG), and 855-864 (TENQGQNRHS). Basic and acidic residues predominate over residues 865–875 (LGTDRTRRDSY). A compositionally biased stretch (polar residues) spans 876–889 (VEQSGRSVKLSQQN). Basic and acidic residues-rich tracts occupy residues 890 to 908 (SREEVRQTQSQRSHDRREQ), 947 to 965 (EQDHCGEEEYQDWDRHSVE), 978 to 998 (THEEEQSHQTSDRQTHVDEQN), 1005 to 1045 (QTHE…KEKY), and 1056 to 1065 (PNREKSHMSE).

This sequence belongs to the S100-fused protein family. Potential substrate of transglutaminase. Some arginines are probably converted to citrullines by peptidylarginine deimidase. Detectable in the stratified internal epithelia of forestomach and tongue and to a lesser degree in normal skin epidermis, where it is restricted to the differentiated suprabasal cell layers. Overexpressed in skin tumors.

It is found in the secreted. It localises to the extracellular space. The protein resides in the extracellular matrix. Its function is as follows. Involved in the cornified cell envelope formation. Multifunctional epidermal matrix protein. The protein is Repetin (Rptn) of Mus musculus (Mouse).